Consider the following 342-residue polypeptide: N-acetyl-gamma-glutamyl-phosphate reductase (342 aa).

C149 is an active-site residue.

Belongs to the NAGSA dehydrogenase family. Type 1 subfamily.

The protein resides in the cytoplasm. It carries out the reaction N-acetyl-L-glutamate 5-semialdehyde + phosphate + NADP(+) = N-acetyl-L-glutamyl 5-phosphate + NADPH + H(+). It functions in the pathway amino-acid biosynthesis; L-arginine biosynthesis; N(2)-acetyl-L-ornithine from L-glutamate: step 3/4. Its function is as follows. Catalyzes the NADPH-dependent reduction of N-acetyl-5-glutamyl phosphate to yield N-acetyl-L-glutamate 5-semialdehyde. The polypeptide is N-acetyl-gamma-glutamyl-phosphate reductase (Aromatoleum aromaticum (strain DSM 19018 / LMG 30748 / EbN1) (Azoarcus sp. (strain EbN1))).